We begin with the raw amino-acid sequence, 207 residues long: Ribosomal RNA small subunit methyltransferase G (207 aa).

S-adenosyl-L-methionine-binding positions include Gly-77, Phe-82, 100–102 (ERS), and Arg-141.

This sequence belongs to the methyltransferase superfamily. RNA methyltransferase RsmG family.

It localises to the cytoplasm. In terms of biological role, specifically methylates the N7 position of a guanine in 16S rRNA. This is Ribosomal RNA small subunit methyltransferase G from Borrelia turicatae (strain 91E135).